A 678-amino-acid chain; its full sequence is Secretin ExeD (678 aa).

The N-terminal stretch at 1 to 25 (MINKGKSWRLATVAAALMMAGSAWA) is a signal peptide. An N0 region spans residues 26 to 122 (TEYSASFKNA…VVDETNPGIG (97 aa)). Positions 124–188 (EMVTRVVPVR…EVVRRVDKAG (65 aa)) are N1. An N2 region spans residues 189–264 (DQEVDIIKLR…MVRQLDRDLQ (76 aa)). Residues 267-347 (GNTRVFYLKY…ELEQVVAKLD (81 aa)) are N3. The segment at 352–602 (QVLVEAIIVE…VFIRPTILRD (251 aa)) is secretin. A s domain region spans residues 604–678 (HVYSGISSNK…GAQPFVQGNK (75 aa)).

It belongs to the bacterial secretin family. GSP D subfamily. Forms a cylindrical channel with 15 subunits.

The protein resides in the cell outer membrane. In terms of biological role, involved in a type II secretion system (T2SS, formerly general secretion pathway, GSP) for the export of proteins. This subunit forms the outer membrane channel. This is Secretin ExeD (exeD) from Aeromonas salmonicida.